The chain runs to 285 residues: tRNA-cytidine(32) 2-sulfurtransferase (285 aa).

The PP-loop motif signature appears at 49 to 54; the sequence is SGGKDS. Cys124, Cys127, and Cys215 together coordinate [4Fe-4S] cluster.

The protein belongs to the TtcA family. As to quaternary structure, homodimer. Mg(2+) is required as a cofactor. Requires [4Fe-4S] cluster as cofactor.

The protein localises to the cytoplasm. It carries out the reaction cytidine(32) in tRNA + S-sulfanyl-L-cysteinyl-[cysteine desulfurase] + AH2 + ATP = 2-thiocytidine(32) in tRNA + L-cysteinyl-[cysteine desulfurase] + A + AMP + diphosphate + H(+). Its pathway is tRNA modification. Functionally, catalyzes the ATP-dependent 2-thiolation of cytidine in position 32 of tRNA, to form 2-thiocytidine (s(2)C32). The sulfur atoms are provided by the cysteine/cysteine desulfurase (IscS) system. This chain is tRNA-cytidine(32) 2-sulfurtransferase, found in Hahella chejuensis (strain KCTC 2396).